Reading from the N-terminus, the 288-residue chain is MCPCPHSQAQGETDGEAEWHNAALDFTHAMSYGDYLKLDKVLDAQFPLSPDHNEMLFIIQHQTSELWMKLMLHELRAAREHVKSGKLGPALKMLARVSRIFDQLVHAWAVLATMTPTEYNTIRPYLGQSSGFQSYQYREIEFILGNKNATLLKPHAHRAELLAALEQALHTPSLYDEAIRLMAAQGLPVSQERLVRDAAAGTCYEASVEAAWRQVYQTPERYWDLYQLAEKLIDLEDSFRQWRFRHVTTVERIIGFKPGTGGTEGVGYLRSMLDTILFPELWRLRSNL.

Substrate is bound by residues 57–61 (FIIQH), Tyr-119, and Arg-123. His-246 contributes to the heme binding site. Thr-260 contacts substrate.

Belongs to the tryptophan 2,3-dioxygenase family. In terms of assembly, homotetramer. The cofactor is heme.

The enzyme catalyses L-tryptophan + O2 = N-formyl-L-kynurenine. The protein operates within amino-acid degradation; L-tryptophan degradation via kynurenine pathway; L-kynurenine from L-tryptophan: step 1/2. Its function is as follows. Heme-dependent dioxygenase that catalyzes the oxidative cleavage of the L-tryptophan (L-Trp) pyrrole ring and converts L-tryptophan to N-formyl-L-kynurenine. Catalyzes the oxidative cleavage of the indole moiety. The chain is Tryptophan 2,3-dioxygenase from Pseudomonas aeruginosa (strain UCBPP-PA14).